The primary structure comprises 166 residues: 2-amino-4-hydroxy-6-hydroxymethyldihydropteridine pyrophosphokinase (166 aa).

It belongs to the HPPK family.

The catalysed reaction is 6-hydroxymethyl-7,8-dihydropterin + ATP = (7,8-dihydropterin-6-yl)methyl diphosphate + AMP + H(+). The protein operates within cofactor biosynthesis; tetrahydrofolate biosynthesis; 2-amino-4-hydroxy-6-hydroxymethyl-7,8-dihydropteridine diphosphate from 7,8-dihydroneopterin triphosphate: step 4/4. Functionally, catalyzes the transfer of pyrophosphate from adenosine triphosphate (ATP) to 6-hydroxymethyl-7,8-dihydropterin, an enzymatic step in folate biosynthesis pathway. The polypeptide is 2-amino-4-hydroxy-6-hydroxymethyldihydropteridine pyrophosphokinase (folK) (Streptococcus pyogenes serotype M18 (strain MGAS8232)).